The sequence spans 96 residues: Large ribosomal subunit protein uL23 (96 aa).

Belongs to the universal ribosomal protein uL23 family. In terms of assembly, part of the 50S ribosomal subunit. Contacts protein L29, and trigger factor when it is bound to the ribosome.

Functionally, one of the early assembly proteins it binds 23S rRNA. One of the proteins that surrounds the polypeptide exit tunnel on the outside of the ribosome. Forms the main docking site for trigger factor binding to the ribosome. The protein is Large ribosomal subunit protein uL23 of Aster yellows witches'-broom phytoplasma (strain AYWB).